The chain runs to 141 residues: Hemoglobin subunit alpha (141 aa).

One can recognise a Globin domain in the interval 1–141 (VLSSKDKANI…VSTVLTSKYR (141 aa)). The residue at position 3 (Ser3) is a Phosphoserine. An N6-succinyllysine mark is found at Lys7 and Lys11. The residue at position 16 (Lys16) is an N6-acetyllysine; alternate. The residue at position 16 (Lys16) is an N6-succinyllysine; alternate. Tyr24 carries the phosphotyrosine modification. Residue Lys40 is modified to N6-succinyllysine. Ser49 is subject to Phosphoserine. His58 is an O2 binding site. Residue His87 participates in heme b binding. Residue Ser102 is modified to Phosphoserine. Position 108 is a phosphothreonine (Thr108). At Ser124 the chain carries Phosphoserine. Thr134 and Thr137 each carry phosphothreonine. Ser138 carries the post-translational modification Phosphoserine.

It belongs to the globin family. As to quaternary structure, heterotetramer of two alpha chains and two beta chains. Red blood cells.

Functionally, involved in oxygen transport from the lung to the various peripheral tissues. Its function is as follows. Hemopressin acts as an antagonist peptide of the cannabinoid receptor CNR1. Hemopressin-binding efficiently blocks cannabinoid receptor CNR1 and subsequent signaling. The sequence is that of Hemoglobin subunit alpha (HBA) from Vicugna pacos (Alpaca).